The following is a 567-amino-acid chain: Hexose transporter HXT16 (567 aa).

The segment covering 1–19 (MASEQSSPEINADNLNSSA) has biased composition (polar residues). The segment at 1-32 (MASEQSSPEINADNLNSSAADVHVQPPGEKEW) is disordered. At 1–55 (MASEQSSPEINADNLNSSAADVHVQPPGEKEWSDGFYDKEVINGNTPDAPKRGFL) the chain is on the cytoplasmic side. A helical transmembrane segment spans residues 56 to 76 (GYLIIYLLCYPVSFGGFLPGW). Residues 77-112 (DSGITAGFINMDNFKMNFGSYKHSTGEYYLSNVRMG) lie on the Extracellular side of the membrane. A helical membrane pass occupies residues 113–133 (LLVAMFSVGCSIGGVAFARLA). Over 134-139 (DTLGRR) the chain is Cytoplasmic. Residues 140-160 (LAIVIVVLVYMVGAIIQISSN) traverse the membrane as a helical segment. The Extracellular portion of the chain corresponds to 161–170 (HKWYQYFVGK). A helical membrane pass occupies residues 171–191 (IIYGLGAGGCSVLCPMLLSEI). Residues 192-197 (APTDLR) lie on the Cytoplasmic side of the membrane. Residues 198–218 (GGLVSLYQLNMTFGIFLGYCS) traverse the membrane as a helical segment. Topologically, residues 219 to 232 (VYGTRKYSNTAQWR) are extracellular. A helical transmembrane segment spans residues 233-253 (IPVGLCFLWALIIIVGMLLVP). Residues 254–336 (ESPRYLIECE…VQTFLQLTGE (83 aa)) lie on the Cytoplasmic side of the membrane. A helical membrane pass occupies residues 337-353 (NYFFFYGTTIFKSVGLT). Residues 354–359 (DGFETS) are Extracellular-facing. Residues 360–377 (IVLGTVNFFSTIIAVMVV) traverse the membrane as a helical segment. Residues 378–384 (DKIGRRK) lie on the Cytoplasmic side of the membrane. The helical transmembrane segment at 385 to 405 (CLLFGAASMMACMVIFASIGV) threads the bilayer. Residues 406–427 (KCLYPHGQDGPSSKGAGNAMIV) lie on the Extracellular side of the membrane. Residues 428-448 (FTCFYIFCFATTWAPVAYIVV) form a helical membrane-spanning segment. Over 449-465 (AESFPSKVKSKAMSIST) the chain is Cytoplasmic. Residues 466 to 486 (AFNWLWQFLIGFFTPFITGSI) traverse the membrane as a helical segment. Residue histidine 487 is a topological domain, extracellular. The helical transmembrane segment at 488 to 508 (FYYGYVFVGCLVAMFLYVFFF) threads the bilayer. The Cytoplasmic segment spans residues 509–567 (LPETIGLSLEETQLLYEEGIKPWKSASWVPPSRRGASSRETEAKKKSWKEVLKFPKSFN). The interval 533–555 (SASWVPPSRRGASSRETEAKKKS) is disordered. Over residues 545–555 (SSRETEAKKKS) the composition is skewed to basic and acidic residues.

It belongs to the major facilitator superfamily. Sugar transporter (TC 2.A.1.1) family.

Its subcellular location is the membrane. In terms of biological role, probable glucose transporter. This Saccharomyces cerevisiae (strain ATCC 204508 / S288c) (Baker's yeast) protein is Hexose transporter HXT16 (HXT16).